Reading from the N-terminus, the 339-residue chain is MIDPVNNFKIPEEWIARSGLPREELEKNVASGMIVILSDGSVLKRGYTTGTTASAAAKAAVLSLKKTVDSVSVPTPVGLRAYLEVSKSSPGRAVVKKIPNDHESDVTRGLEFVGEAREAEGISILGGKGIGIVKRDGLQVPKGKPAINPKPMEQIRAAVQEAVEELGLKGAEVTILIPEGERIGKETLNSRIGVEGGISVLGSTGFVEPWNDHLGEMRGDLIRCTDKVVLTTGRIGMKYSHMLFPDYTVVMVGSRISEGLDNASGDIIICGLPGLVLKWGNPKMLEGSGYATVVEMLEKAPEHERLKEAFEMAVEKGKGARIVVIDRDGSVLMDSKSGK.

The protein belongs to the CbiD family.

The enzyme catalyses Co-precorrin-5B + S-adenosyl-L-methionine = Co-precorrin-6A + S-adenosyl-L-homocysteine. The protein operates within cofactor biosynthesis; adenosylcobalamin biosynthesis; cob(II)yrinate a,c-diamide from sirohydrochlorin (anaerobic route): step 6/10. In terms of biological role, catalyzes the methylation of C-1 in cobalt-precorrin-5B to form cobalt-precorrin-6A. In Methanosarcina acetivorans (strain ATCC 35395 / DSM 2834 / JCM 12185 / C2A), this protein is Cobalt-precorrin-5B C(1)-methyltransferase.